The primary structure comprises 75 residues: Small, acid-soluble spore protein Tlp (75 aa).

It belongs to the Tlp family.

It localises to the spore core. In Geobacillus kaustophilus (strain HTA426), this protein is Small, acid-soluble spore protein Tlp.